We begin with the raw amino-acid sequence, 404 residues long: Argininosuccinate synthase (404 aa).

ATP-binding positions include Ala10–Ser18 and Ala37. Positions 89 and 94 each coordinate L-citrulline. Gly119 lines the ATP pocket. Residues Thr121, Asn125, and Asp126 each coordinate L-aspartate. Asn125 is a binding site for L-citrulline. L-citrulline is bound by residues Arg129, Ser178, Ser187, Glu263, and Tyr275.

Belongs to the argininosuccinate synthase family. Type 1 subfamily. Homotetramer.

The protein resides in the cytoplasm. The catalysed reaction is L-citrulline + L-aspartate + ATP = 2-(N(omega)-L-arginino)succinate + AMP + diphosphate + H(+). It participates in amino-acid biosynthesis; L-arginine biosynthesis; L-arginine from L-ornithine and carbamoyl phosphate: step 2/3. This Photobacterium profundum (strain SS9) protein is Argininosuccinate synthase.